The chain runs to 535 residues: CTP synthase (535 aa).

Positions 1–267 are amidoligase domain; it reads MTKYIFVTGG…DQIVCDHLKL (267 aa). Ser-13 contacts CTP. Ser-13 contacts UTP. An ATP-binding site is contributed by 14 to 19; that stretch reads SLGKGI. Tyr-54 is a binding site for L-glutamine. Residue Asp-71 coordinates ATP. Mg(2+)-binding residues include Asp-71 and Glu-141. CTP is bound by residues 148–150, 188–193, and Lys-224; these read DIE and KTKPTQ. Residues 188-193 and Lys-224 contribute to the UTP site; that span reads KTKPTQ. Residues 292–534 enclose the Glutamine amidotransferase type-1 domain; sequence RIALVGKYVE…VQASITNKES (243 aa). An L-glutamine-binding site is contributed by Gly-354. The active-site Nucleophile; for glutamine hydrolysis is Cys-381. L-glutamine is bound by residues 382–385, Glu-405, and Arg-462; that span reads LGMQ. Active-site residues include His-507 and Glu-509.

This sequence belongs to the CTP synthase family. As to quaternary structure, homotetramer.

The enzyme catalyses UTP + L-glutamine + ATP + H2O = CTP + L-glutamate + ADP + phosphate + 2 H(+). It carries out the reaction L-glutamine + H2O = L-glutamate + NH4(+). The catalysed reaction is UTP + NH4(+) + ATP = CTP + ADP + phosphate + 2 H(+). It participates in pyrimidine metabolism; CTP biosynthesis via de novo pathway; CTP from UDP: step 2/2. Allosterically activated by GTP, when glutamine is the substrate; GTP has no effect on the reaction when ammonia is the substrate. The allosteric effector GTP functions by stabilizing the protein conformation that binds the tetrahedral intermediate(s) formed during glutamine hydrolysis. Inhibited by the product CTP, via allosteric rather than competitive inhibition. Functionally, catalyzes the ATP-dependent amination of UTP to CTP with either L-glutamine or ammonia as the source of nitrogen. Regulates intracellular CTP levels through interactions with the four ribonucleotide triphosphates. The polypeptide is CTP synthase (Bacillus cytotoxicus (strain DSM 22905 / CIP 110041 / 391-98 / NVH 391-98)).